The chain runs to 324 residues: Malate dehydrogenase (324 aa).

NAD(+)-binding positions include 21-26 and Asp-45; that span reads GAGRVG. 2 residues coordinate substrate: Arg-94 and Arg-100. Residues Asn-107 and 130–132 each bind NAD(+); that span reads VTN. Asn-132 and Arg-163 together coordinate substrate. The active-site Proton acceptor is His-187.

The protein belongs to the LDH/MDH superfamily. MDH type 3 family.

The catalysed reaction is (S)-malate + NAD(+) = oxaloacetate + NADH + H(+). Its function is as follows. Catalyzes the reversible oxidation of malate to oxaloacetate. This is Malate dehydrogenase from Trichormus variabilis (strain ATCC 29413 / PCC 7937) (Anabaena variabilis).